A 449-amino-acid polypeptide reads, in one-letter code: Serine--tRNA ligase (449 aa).

Residue Thr-256–Glu-258 participates in L-serine binding. Arg-287–Glu-289 contacts ATP. L-serine is bound at residue Glu-310. An ATP-binding site is contributed by Glu-374 to Ser-377. Ser-410 contacts L-serine.

The protein belongs to the class-II aminoacyl-tRNA synthetase family. Type-1 seryl-tRNA synthetase subfamily. As to quaternary structure, homodimer. The tRNA molecule binds across the dimer.

It localises to the cytoplasm. The catalysed reaction is tRNA(Ser) + L-serine + ATP = L-seryl-tRNA(Ser) + AMP + diphosphate + H(+). It carries out the reaction tRNA(Sec) + L-serine + ATP = L-seryl-tRNA(Sec) + AMP + diphosphate + H(+). It functions in the pathway aminoacyl-tRNA biosynthesis; selenocysteinyl-tRNA(Sec) biosynthesis; L-seryl-tRNA(Sec) from L-serine and tRNA(Sec): step 1/1. Catalyzes the attachment of serine to tRNA(Ser). Is also able to aminoacylate tRNA(Sec) with serine, to form the misacylated tRNA L-seryl-tRNA(Sec), which will be further converted into selenocysteinyl-tRNA(Sec). This Xanthomonas oryzae pv. oryzae (strain MAFF 311018) protein is Serine--tRNA ligase.